Here is a 350-residue protein sequence, read N- to C-terminus: Nicotinate-nucleotide--dimethylbenzimidazole phosphoribosyltransferase (350 aa).

The active-site Proton acceptor is Glu-317.

It belongs to the CobT family.

The enzyme catalyses 5,6-dimethylbenzimidazole + nicotinate beta-D-ribonucleotide = alpha-ribazole 5'-phosphate + nicotinate + H(+). It functions in the pathway nucleoside biosynthesis; alpha-ribazole biosynthesis; alpha-ribazole from 5,6-dimethylbenzimidazole: step 1/2. Functionally, catalyzes the synthesis of alpha-ribazole-5'-phosphate from nicotinate mononucleotide (NAMN) and 5,6-dimethylbenzimidazole (DMB). This chain is Nicotinate-nucleotide--dimethylbenzimidazole phosphoribosyltransferase, found in Shewanella sp. (strain W3-18-1).